The sequence spans 123 residues: Protein Wnt-3a (123 aa).

The O-palmitoleoyl serine moiety is linked to residue Ser-1. Cys-89 and Cys-104 are disulfide-bonded. Asn-90 carries N-linked (GlcNAc...) asparagine glycosylation.

The protein belongs to the Wnt family. Post-translationally, disulfide bonds have critical and distinct roles in secretion and activity. Loss of each conserved cysteine results in high molecular weight oxidized Wnt oligomers, which are formed through inter-Wnt disulfide bonding. Palmitoleoylation is required for efficient binding to frizzled receptors. Depalmitoleoylation leads to Wnt signaling pathway inhibition.

The protein resides in the secreted. The protein localises to the extracellular space. It localises to the extracellular matrix. In terms of biological role, ligand for members of the frizzled family of seven transmembrane receptors. Functions in the canonical Wnt signaling pathway that results in activation of transcription factors of the TCF/LEF family. Required for normal embryonic mesoderm development and formation of caudal somites. Required for normal morphogenesis of the developing neural tube. This chain is Protein Wnt-3a (WNT-3A), found in Plethodon jordani (Red-cheeked salamander).